The following is a 435-amino-acid chain: Enolase (435 aa).

Gln-163 contacts (2R)-2-phosphoglycerate. Residue Glu-205 is the Proton donor of the active site. Mg(2+) contacts are provided by Asp-243, Glu-292, and Asp-319. 4 residues coordinate (2R)-2-phosphoglycerate: Lys-344, Arg-373, Ser-374, and Lys-395. The active-site Proton acceptor is Lys-344.

It belongs to the enolase family. Mg(2+) serves as cofactor.

It is found in the cytoplasm. It localises to the secreted. The protein resides in the cell surface. It carries out the reaction (2R)-2-phosphoglycerate = phosphoenolpyruvate + H2O. Its pathway is carbohydrate degradation; glycolysis; pyruvate from D-glyceraldehyde 3-phosphate: step 4/5. In terms of biological role, catalyzes the reversible conversion of 2-phosphoglycerate (2-PG) into phosphoenolpyruvate (PEP). It is essential for the degradation of carbohydrates via glycolysis. The sequence is that of Enolase from Streptococcus uberis (strain ATCC BAA-854 / 0140J).